The sequence spans 624 residues: tRNA uridine 5-carboxymethylaminomethyl modification enzyme MnmG (624 aa).

Residues 14–19 (GGGHAG), valine 126, and serine 181 contribute to the FAD site. Position 273 to 287 (273 to 287 (GPRYCPSIEDKVVRF)) interacts with NAD(+). Residue glutamine 370 participates in FAD binding.

This sequence belongs to the MnmG family. As to quaternary structure, homodimer. Heterotetramer of two MnmE and two MnmG subunits. It depends on FAD as a cofactor.

The protein localises to the cytoplasm. NAD-binding protein involved in the addition of a carboxymethylaminomethyl (cmnm) group at the wobble position (U34) of certain tRNAs, forming tRNA-cmnm(5)s(2)U34. This chain is tRNA uridine 5-carboxymethylaminomethyl modification enzyme MnmG, found in Geotalea uraniireducens (strain Rf4) (Geobacter uraniireducens).